The chain runs to 547 residues: Sterol carrier protein 2 (547 aa).

A Phosphoserine modification is found at S3. At K132 the chain carries N6-acetyllysine; alternate. K132 carries the N6-succinyllysine; alternate modification. Position 168 is an N6-succinyllysine (K168). Residues K173 and K177 each carry the N6-acetyllysine modification. K183 is modified (N6-acetyllysine; alternate). Residue K183 is modified to N6-succinyllysine; alternate. An N6-succinyllysine modification is found at K282. K341, K432, K438, K443, and K453 each carry N6-acetyllysine; alternate. Residues K341, K432, K438, K443, and K453 each carry the N6-succinyllysine; alternate modification. The region spanning 433-543 is the SCP2 domain; sequence ANLVFKEIEK…KLQNLQLQPG (111 aa). At K464 the chain carries N6-succinyllysine. K470 is subject to N6-acetyllysine; alternate. K470 carries the post-translational modification N6-succinyllysine; alternate. Position 479 is an N6-succinyllysine (K479). Residue K491 is modified to N6-acetyllysine. N6-succinyllysine is present on residues K492 and K511. Residue S516 is modified to Phosphoserine. Residues K522 and K534 each carry the N6-succinyllysine modification. The short motif at 545-547 is the Microbody targeting signal element; the sequence is AKL.

It in the N-terminal section; belongs to the thiolase-like superfamily. Thiolase family. Interacts with PEX5; the interaction is essential for peroxisomal import. Post-translationally, preSCP2, a protein with a molecular mass of about 15 kDa, is processed into its mature form (SCP2) by proteolytic cleavage of a 20 residue leader sequence after translocation into peroxisomes. As to expression, liver, fibroblasts, and placenta.

The protein localises to the peroxisome. Its subcellular location is the cytoplasm. The protein resides in the mitochondrion. It is found in the endoplasmic reticulum. The catalysed reaction is choloyl-CoA + propanoyl-CoA = 3alpha,7alpha,12alpha-trihydroxy-24-oxo-5beta-cholestan-26-oyl-CoA + CoA. It carries out the reaction 4,8,12-trimethyltridecanoyl-CoA + propanoyl-CoA = 3-oxopristanoyl-CoA + CoA. The enzyme catalyses an acyl-CoA + acetyl-CoA = a 3-oxoacyl-CoA + CoA. It catalyses the reaction hexanoyl-CoA + acetyl-CoA = 3-oxooctanoyl-CoA + CoA. The catalysed reaction is tetradecanoyl-CoA + acetyl-CoA = 3-oxohexadecanoyl-CoA + CoA. It carries out the reaction 3-oxohexadecanedioyl-CoA + CoA = tetradecanedioyl-CoA + acetyl-CoA. The enzyme catalyses propanoyl-CoA + tetradecanoyl-CoA = 3-oxo-2-methylhexadecanoyl-CoA + CoA. It catalyses the reaction butanoyl-CoA + acetyl-CoA = 3-oxohexanoyl-CoA + CoA. The catalysed reaction is octanoyl-CoA + acetyl-CoA = 3-oxodecanoyl-CoA + CoA. It carries out the reaction decanoyl-CoA + acetyl-CoA = 3-oxododecanoyl-CoA + CoA. The enzyme catalyses dodecanoyl-CoA + acetyl-CoA = 3-oxotetradecanoyl-CoA + CoA. It catalyses the reaction hexadecanoyl-CoA + acetyl-CoA = 3-oxooctadecanoyl-CoA + CoA. The catalysed reaction is 3-oxo-(9Z-octadecenoyl)-CoA + CoA = (7Z)-hexadecenoyl-CoA + acetyl-CoA. It carries out the reaction 7-dehydrocholesterol(in) = 7-dehydrocholesterol(out). Functionally, plays a crucial role in the peroxisomal oxidation of branched-chain fatty acids. Catalyzes the last step of the peroxisomal beta-oxidation of branched chain fatty acids and the side chain of the bile acid intermediates di- and trihydroxycoprostanic acids (DHCA and THCA). Also active with medium and long straight chain 3-oxoacyl-CoAs. Stimulates the microsomal conversion of 7-dehydrocholesterol to cholesterol and transfers phosphatidylcholine and 7-dehydrocholesterol between membrances, in vitro. Isoforms SCP2 and SCPx cooperate in peroxisomal oxidation of certain naturally occurring tetramethyl-branched fatty acyl-CoAs. Its function is as follows. Mediates the transfer of all common phospholipids, cholesterol and gangliosides from the endoplasmic reticulum to the plasma membrane. May play a role in regulating steroidogenesis. Stimulates the microsomal conversion of 7-dehydrocholesterol to cholesterol. Also binds fatty acids and fatty acyl Coenzyme A (CoA) such as phytanoyl-CoA. Involved in the regulation phospholipid synthesis in endoplasmic reticulum enhancing the incorporation of exogenous fatty acid into glycerides. Seems to stimulate the rate-limiting step in phosphatidic acid formation mediated by GPAT3. Isoforms SCP2 and SCPx cooperate in peroxisomal oxidation of certain naturally occurring tetramethyl-branched fatty acyl-CoAs. The sequence is that of Sterol carrier protein 2 from Homo sapiens (Human).